A 1681-amino-acid chain; its full sequence is Meiosis regulator and mRNA stability factor 1 (1681 aa).

The NYN domain maps to I340–I477. 2 disordered regions span residues V576 to V595 and Q638 to F717. Polar residues predominate over residues Q638 to S647. Positions Q648–D658 are enriched in basic and acidic residues. Polar residues predominate over residues K659–S690. Basic and acidic residues predominate over residues Q692 to V715. Positions A779–G858 constitute an RRM domain. HTH OST-type domains lie at S863–G937, S991–P1067, Q1087–R1161, Q1163–R1238, R1247–M1321, R1323–K1398, S1399–L1472, and S1474–D1548. Over residues E1637–S1648 the composition is skewed to polar residues. Residues E1637 to Q1662 are disordered. A compositionally biased stretch (basic and acidic residues) spans K1649–V1659.

It localises to the peroxisome. Functionally, essential regulator of oogenesis required for female meiotic progression to repress transposable elements and preventing their mobilization, which is essential for the germline integrity. The protein is Meiosis regulator and mRNA stability factor 1 of Xenopus tropicalis (Western clawed frog).